A 398-amino-acid chain; its full sequence is tRNA-specific 2-thiouridylase MnmA (398 aa).

Residues 20-27 and Leu-46 contribute to the ATP site; that span reads AMSGGVDS. The Nucleophile role is filled by Cys-114. The cysteines at positions 114 and 210 are disulfide-linked. Gly-138 contributes to the ATP binding site. An interaction with tRNA region spans residues 160–162; that stretch reads RDQ. Cys-210 serves as the catalytic Cysteine persulfide intermediate.

The protein belongs to the MnmA/TRMU family.

Its subcellular location is the cytoplasm. It carries out the reaction S-sulfanyl-L-cysteinyl-[protein] + uridine(34) in tRNA + AH2 + ATP = 2-thiouridine(34) in tRNA + L-cysteinyl-[protein] + A + AMP + diphosphate + H(+). Catalyzes the 2-thiolation of uridine at the wobble position (U34) of tRNA, leading to the formation of s(2)U34. The protein is tRNA-specific 2-thiouridylase MnmA of Brucella canis (strain ATCC 23365 / NCTC 10854 / RM-666).